We begin with the raw amino-acid sequence, 570 residues long: Low-affinity glucose transporter HXT1 (570 aa).

Residues 1–20 (MNSTPDLISPQKSNSSNSYE) are compositionally biased toward polar residues. The interval 1–51 (MNSTPDLISPQKSNSSNSYELESGRSKAMNTPEGKNESFHDNLSESQVQPA) is disordered. The Cytoplasmic portion of the chain corresponds to 1–60 (MNSTPDLISPQKSNSSNSYELESGRSKAMNTPEGKNESFHDNLSESQVQPAVAPPNTGKG). Serine 23, serine 38, and serine 44 each carry phosphoserine. Over residues 34 to 43 (GKNESFHDNL) the composition is skewed to basic and acidic residues. Residues 61-81 (VYVTVSICCVMVAFGGFIFGW) form a helical membrane-spanning segment. The Extracellular segment spans residues 82 to 116 (DTGTISGFVAQTDFLRRFGMKHHDGSHYLSKVRTG). A helical membrane pass occupies residues 117–137 (LIVSIFNIGCAIGGIVLAKLG). Residues 138–143 (DMYGRR) are Cytoplasmic-facing. Residues 144 to 164 (IGLIVVVVIYTIGIIIQIASI) traverse the membrane as a helical segment. Over 165–174 (NKWYQYFIGR) the chain is Extracellular. A helical transmembrane segment spans residues 175 to 195 (IISGLGVGGITVLSPMLISEV). The Cytoplasmic portion of the chain corresponds to 196–201 (APSEMR). The helical transmembrane segment at 202 to 222 (GTLVSCYQVMITLGIFLGYCT) threads the bilayer. Topologically, residues 223 to 236 (NFGTKNYSNSVQWR) are extracellular. N-linked (GlcNAc...) asparagine glycosylation is present at asparagine 228. Residues 237 to 257 (VPLGLCFAWALFMIGGMMFVP) form a helical membrane-spanning segment. The Cytoplasmic portion of the chain corresponds to 258-340 (ESPRYLVEAG…IQSLQQLTGD (83 aa)). A helical membrane pass occupies residues 341 to 357 (NYFFYYGTIVFQAVGLS). The Extracellular portion of the chain corresponds to 358-363 (DSFETS). The helical transmembrane segment at 364–381 (IVFGVVNFFSTCCSLYTV) threads the bilayer. Residues 382-388 (DRFGRRN) are Cytoplasmic-facing. A helical transmembrane segment spans residues 389–409 (CLMWGAVGMVCCYVVYASVGV). The Extracellular segment spans residues 410 to 431 (TRLWPNGQDQPSSKGAGNCMIV). A helical transmembrane segment spans residues 432-452 (FACFYIFCFATTWAPIAYVVI). Topologically, residues 453 to 469 (SECFPLRVKSKCMSIAS) are cytoplasmic. A helical transmembrane segment spans residues 470–490 (AANWIWGFLISFFTPFITGAI). Asparagine 491 is a topological domain (extracellular). A helical transmembrane segment spans residues 492–512 (FYYGYVFMGCMVFAYFYVFFF). Topologically, residues 513-570 (VPETKGLSLEEVNDMYAEGVLPWKSASWVPVSKRGADYNADDLMHDDQPFYKSLFSRK) are cytoplasmic.

Belongs to the major facilitator superfamily. Sugar transporter (TC 2.A.1.1) family.

The protein localises to the membrane. In terms of biological role, low-affinity glucose transporter. HXT1 is as well involved in the transport of mannose. This Saccharomyces cerevisiae (strain ATCC 204508 / S288c) (Baker's yeast) protein is Low-affinity glucose transporter HXT1 (HXT1).